The sequence spans 457 residues: Serine--tRNA ligase (457 aa).

Position 252–254 (252–254 (TAE)) interacts with L-serine. Residues 283–285 (RKE) and Val-299 each bind ATP. Position 306 (Glu-306) interacts with L-serine. 370 to 373 (EVVS) serves as a coordination point for ATP. Thr-406 contacts L-serine.

This sequence belongs to the class-II aminoacyl-tRNA synthetase family. Type-1 seryl-tRNA synthetase subfamily. As to quaternary structure, homodimer. The tRNA molecule binds across the dimer.

The protein localises to the cytoplasm. The enzyme catalyses tRNA(Ser) + L-serine + ATP = L-seryl-tRNA(Ser) + AMP + diphosphate + H(+). The catalysed reaction is tRNA(Sec) + L-serine + ATP = L-seryl-tRNA(Sec) + AMP + diphosphate + H(+). It functions in the pathway aminoacyl-tRNA biosynthesis; selenocysteinyl-tRNA(Sec) biosynthesis; L-seryl-tRNA(Sec) from L-serine and tRNA(Sec): step 1/1. In terms of biological role, catalyzes the attachment of serine to tRNA(Ser). Is also able to aminoacylate tRNA(Sec) with serine, to form the misacylated tRNA L-seryl-tRNA(Sec), which will be further converted into selenocysteinyl-tRNA(Sec). This chain is Serine--tRNA ligase, found in Thermococcus onnurineus (strain NA1).